The sequence spans 527 residues: Catalase (527 aa).

Over residues 1-22 the composition is skewed to basic and acidic residues; that stretch reads MSDSRDPASDQMKQWKEQRASQ. The tract at residues 1–34 is disordered; the sequence is MSDSRDPASDQMKQWKEQRASQRPDVLTTGGGNP. Position 2 is an N-acetylserine (serine 2). Position 9 is a phosphoserine (serine 9). N6-succinyllysine is present on lysine 13. The residue at position 21 (serine 21) is a Phosphoserine. Catalysis depends on residues histidine 75 and asparagine 148. NADP(+) is bound by residues histidine 194, serine 201, arginine 203, and asparagine 213. Position 221 is an N6-succinyllysine (lysine 221). Lysine 233 bears the N6-acetyllysine mark. Positions 237, 303, 305, and 306 each coordinate NADP(+). The residue at position 306 (lysine 306) is an N6-acetyllysine; alternate. Lysine 306 is modified (N6-succinyllysine; alternate). Tyrosine 358 lines the heme pocket. Phosphoserine is present on residues serine 417 and serine 422. At lysine 430 the chain carries N6-acetyllysine; alternate. Lysine 430 is subject to N6-succinyllysine; alternate. Phosphoserine is present on serine 434. N6-acetyllysine; alternate occurs at positions 449 and 480. An N6-succinyllysine; alternate mark is found at lysine 449 and lysine 480. Lysine 499 is subject to N6-acetyllysine. Phosphothreonine is present on threonine 511. At serine 517 the chain carries Phosphoserine. Lysine 522 is modified (N6-succinyllysine). The Microbody targeting signal; atypical signature appears at 524 to 527; sequence KANL.

The protein belongs to the catalase family. Homotetramer. Interacts (via microbody targeting signal) with PEX5, monomeric form interacts with PEX5, leading to its translocation into peroxisomes. Heme serves as cofactor. It depends on NADP(+) as a cofactor.

Its subcellular location is the peroxisome matrix. The enzyme catalyses 2 H2O2 = O2 + 2 H2O. Its function is as follows. Catalyzes the degradation of hydrogen peroxide (H(2)O(2)) generated by peroxisomal oxidases to water and oxygen, thereby protecting cells from the toxic effects of hydrogen peroxide. Promotes growth of cells including T-cells, B-cells, myeloid leukemia cells, melanoma cells, mastocytoma cells and normal and transformed fibroblast cells. The polypeptide is Catalase (Cat) (Mus musculus (Mouse)).